The following is a 413-amino-acid chain: 3-oxoacyl-[acyl-carrier-protein] synthase 2 (413 aa).

The 410-residue stretch at 3–412 folds into the Ketosynthase family 3 (KS3) domain; that stretch reads KRRVVVTGLG…GTNGSLIFKK (410 aa). Catalysis depends on for beta-ketoacyl synthase activity residues Cys164, His304, and His341.

The protein belongs to the thiolase-like superfamily. Beta-ketoacyl-ACP synthases family. As to quaternary structure, homodimer.

The enzyme catalyses a fatty acyl-[ACP] + malonyl-[ACP] + H(+) = a 3-oxoacyl-[ACP] + holo-[ACP] + CO2. It carries out the reaction (9Z)-hexadecenoyl-[ACP] + malonyl-[ACP] + H(+) = 3-oxo-(11Z)-octadecenoyl-[ACP] + holo-[ACP] + CO2. It participates in lipid metabolism; fatty acid biosynthesis. Functionally, involved in the type II fatty acid elongation cycle. Catalyzes the elongation of a wide range of acyl-ACP by the addition of two carbons from malonyl-ACP to an acyl acceptor. Can efficiently catalyze the conversion of palmitoleoyl-ACP (cis-hexadec-9-enoyl-ACP) to cis-vaccenoyl-ACP (cis-octadec-11-enoyl-ACP), an essential step in the thermal regulation of fatty acid composition. The protein is 3-oxoacyl-[acyl-carrier-protein] synthase 2 (fabF) of Escherichia coli O157:H7.